We begin with the raw amino-acid sequence, 213 residues long: Orotate phosphoribosyltransferase (213 aa).

Position 26 (K26) interacts with 5-phospho-alpha-D-ribose 1-diphosphate. 34–35 (FF) contributes to the orotate binding site. Residues 72 to 73 (YK), R99, K100, K103, H105, and 124 to 132 (DDVITAGTA) each bind 5-phospho-alpha-D-ribose 1-diphosphate. Orotate-binding residues include T128 and R156.

The protein belongs to the purine/pyrimidine phosphoribosyltransferase family. PyrE subfamily. In terms of assembly, homodimer. Requires Mg(2+) as cofactor.

The catalysed reaction is orotidine 5'-phosphate + diphosphate = orotate + 5-phospho-alpha-D-ribose 1-diphosphate. The protein operates within pyrimidine metabolism; UMP biosynthesis via de novo pathway; UMP from orotate: step 1/2. Catalyzes the transfer of a ribosyl phosphate group from 5-phosphoribose 1-diphosphate to orotate, leading to the formation of orotidine monophosphate (OMP). This Escherichia coli O139:H28 (strain E24377A / ETEC) protein is Orotate phosphoribosyltransferase.